Here is a 1050-residue protein sequence, read N- to C-terminus: Toluene efflux pump membrane transporter TtgB (1050 aa).

12 helical membrane passes run Ile-10–Leu-30, Gly-339–Leu-359, Met-370–Ile-390, Leu-393–Val-413, Gly-440–Gly-460, Ile-472–Leu-492, Val-539–Ile-559, Met-871–Glu-891, Trp-893–Ala-913, Val-923–Ile-943, Ile-972–Ala-992, and Val-1004–Val-1024.

The protein belongs to the resistance-nodulation-cell division (RND) (TC 2.A.6) family.

It localises to the cell inner membrane. Its function is as follows. The inner membrane transporter component of a constitutive organic solvent efflux system. Involved in export of toluene, styrene, m-xylene, propylbenzene and ethylbenzene. Also exports AMP and the antibiotics carbenicillin, nalidixic acid, chloramphenicol and tetracycline. This chain is Toluene efflux pump membrane transporter TtgB (ttgB), found in Pseudomonas putida (strain DOT-T1E).